The following is a 123-amino-acid chain: MPTIKQLIRNTRQPMRNVTKSPALRGCPQRRGTCTRVYTITPKKPNSALRKVARVRLTSGFEITAYIPGIGHNLQEHSVVLVRGGRVKDLPGVRYHIVRGTLDAVGVKDRQQGRSKYGVKKPK.

The protein belongs to the universal ribosomal protein uS12 family. Part of the 30S ribosomal subunit.

The protein localises to the plastid. It localises to the chloroplast. Functionally, with S4 and S5 plays an important role in translational accuracy. Located at the interface of the 30S and 50S subunits. The polypeptide is Small ribosomal subunit protein uS12cz/uS12cy (rps12-A) (Nymphaea alba (White water-lily)).